Reading from the N-terminus, the 149-residue chain is Transcriptional regulator MraZ (149 aa).

2 SpoVT-AbrB domains span residues 7 to 54 (KYVN…GISH) and 83 to 126 (AVQL…QPQN).

This sequence belongs to the MraZ family. Forms oligomers.

The protein resides in the cytoplasm. The protein localises to the nucleoid. This Rickettsia akari (strain Hartford) protein is Transcriptional regulator MraZ.